The chain runs to 240 residues: Methylthioribulose-1-phosphate dehydratase (240 aa).

Cys99 contributes to the substrate binding site. Zn(2+) is bound by residues His116 and His118. Glu145 serves as the catalytic Proton donor/acceptor. His201 serves as a coordination point for Zn(2+).

It belongs to the aldolase class II family. MtnB subfamily. Zn(2+) is required as a cofactor.

The protein resides in the cytoplasm. The catalysed reaction is 5-(methylsulfanyl)-D-ribulose 1-phosphate = 5-methylsulfanyl-2,3-dioxopentyl phosphate + H2O. Its pathway is amino-acid biosynthesis; L-methionine biosynthesis via salvage pathway; L-methionine from S-methyl-5-thio-alpha-D-ribose 1-phosphate: step 2/6. In terms of biological role, catalyzes the dehydration of methylthioribulose-1-phosphate (MTRu-1-P) into 2,3-diketo-5-methylthiopentyl-1-phosphate (DK-MTP-1-P). In Ajellomyces capsulatus (strain G186AR / H82 / ATCC MYA-2454 / RMSCC 2432) (Darling's disease fungus), this protein is Methylthioribulose-1-phosphate dehydratase.